Reading from the N-terminus, the 853-residue chain is Aminotransferase PigE (853 aa).

503 to 504 provides a ligand contact to pyridoxal 5'-phosphate; that stretch reads GT. K645 carries the N6-(pyridoxal phosphate)lysine modification. T680 contacts pyridoxal 5'-phosphate.

It belongs to the class-III pyridoxal-phosphate-dependent aminotransferase family. As to quaternary structure, homodimer. Pyridoxal 5'-phosphate serves as cofactor.

It functions in the pathway antibiotic biosynthesis; prodigiosin biosynthesis. Its function is as follows. Involved in the biosynthesis of 2-methyl-3-n-amyl-pyrrole (MAP), one of the terminal products involved in the biosynthesis of the red antibiotic prodigiosin (Pig). Catalyzes the transamination to the aldehyde group of 3-acetyloctanal, resulting in an aminoketone, which spontaneously cyclizes to yield the dihydro form of MAP (H2MAP). This chain is Aminotransferase PigE, found in Serratia sp. (strain FS14).